A 349-amino-acid polypeptide reads, in one-letter code: Peptide transport system ATP-binding protein SapD (349 aa).

The region spanning 1–259 (MALLDICNLN…PHHPYTQALI (259 aa)) is the ABC transporter domain. Position 40–47 (40–47 (GESGSGKS)) interacts with ATP.

It belongs to the ABC transporter superfamily.

It is found in the cell inner membrane. Involved in a peptide intake transport system that plays a role in the resistance to antimicrobial peptides. The polypeptide is Peptide transport system ATP-binding protein SapD (sapD) (Haemophilus influenzae (strain ATCC 51907 / DSM 11121 / KW20 / Rd)).